We begin with the raw amino-acid sequence, 230 residues long: Fibrillarin-like rRNA/tRNA 2'-O-methyltransferase (230 aa).

Residues 87 to 88 (TT), 105 to 106 (EF), 130 to 131 (DA), and 150 to 153 (DVAQ) contribute to the S-adenosyl-L-methionine site.

Belongs to the methyltransferase superfamily. Fibrillarin family. In terms of assembly, interacts with nop5. Component of box C/D small ribonucleoprotein (sRNP) particles that contain rpl7ae, FlpA and nop5, plus a guide RNA.

In terms of biological role, involved in pre-rRNA and tRNA processing. Utilizes the methyl donor S-adenosyl-L-methionine to catalyze the site-specific 2'-hydroxyl methylation of ribose moieties in rRNA and tRNA. Site specificity is provided by a guide RNA that base pairs with the substrate. Methylation occurs at a characteristic distance from the sequence involved in base pairing with the guide RNA. The chain is Fibrillarin-like rRNA/tRNA 2'-O-methyltransferase from Methanococcus maripaludis (strain DSM 14266 / JCM 13030 / NBRC 101832 / S2 / LL).